Reading from the N-terminus, the 299-residue chain is Probable lipid kinase YegS (299 aa).

A DAGKc domain is found at 2-133 (ANFPASLLIL…IDMARVNDKT (132 aa)). ATP contacts are provided by residues threonine 40, 66-72 (GDGTINE), and threonine 95. Positions 215, 218, and 220 each coordinate Mg(2+). Residue glutamate 271 is the Proton acceptor of the active site.

This sequence belongs to the diacylglycerol/lipid kinase family. YegS lipid kinase subfamily. Mg(2+) serves as cofactor. It depends on Ca(2+) as a cofactor.

It is found in the cytoplasm. Its function is as follows. Probably phosphorylates lipids; the in vivo substrate is unknown. This is Probable lipid kinase YegS from Salmonella paratyphi A (strain ATCC 9150 / SARB42).